Consider the following 155-residue polypeptide: Gas vesicle protein K (155 aa).

This sequence belongs to the gas vesicle GvpK family.

Its subcellular location is the gas vesicle. In terms of biological role, might be involved in nucleating gas vesicle formation. Gas vesicles (GV) are hollow, gas filled proteinaceous nanostructures. During planktonic growth they allow positioning of the organism at a favorable depth for light or nutrient acquisition. The polypeptide is Gas vesicle protein K (Dolichospermum flosaquae (Anabaena flos-aquae)).